Here is a 268-residue protein sequence, read N- to C-terminus: Phosphate import ATP-binding protein PstB 3 (268 aa).

Positions Leu-15 to Pro-254 constitute an ABC transporter domain. Residue Gly-47–Ser-54 coordinates ATP.

It belongs to the ABC transporter superfamily. Phosphate importer (TC 3.A.1.7) family. In terms of assembly, the complex is composed of two ATP-binding proteins (PstB), two transmembrane proteins (PstC and PstA) and a solute-binding protein (PstS).

The protein localises to the cell inner membrane. The catalysed reaction is phosphate(out) + ATP + H2O = ADP + 2 phosphate(in) + H(+). Its function is as follows. Part of the ABC transporter complex PstSACB involved in phosphate import. Responsible for energy coupling to the transport system. The sequence is that of Phosphate import ATP-binding protein PstB 3 from Nostoc sp. (strain PCC 7120 / SAG 25.82 / UTEX 2576).